Here is a 230-residue protein sequence, read N- to C-terminus: Large ribosomal subunit protein uL1 (230 aa).

Belongs to the universal ribosomal protein uL1 family. Part of the 50S ribosomal subunit.

Its function is as follows. Binds directly to 23S rRNA. The L1 stalk is quite mobile in the ribosome, and is involved in E site tRNA release. Functionally, protein L1 is also a translational repressor protein, it controls the translation of the L11 operon by binding to its mRNA. This is Large ribosomal subunit protein uL1 from Nitrosomonas europaea (strain ATCC 19718 / CIP 103999 / KCTC 2705 / NBRC 14298).